A 260-amino-acid polypeptide reads, in one-letter code: Winged helix repair factor 1 (260 aa).

Winged helix domain regions lie at residues 38-110 (FTED…MVVM), 126-185 (SRAT…LAVP), and 186-260 (GAGR…ISET).

This sequence belongs to the STK19 family. As to quaternary structure, monomer in solution. Homodimer; when bound to DNA. Component of a transcription-coupled nucleotide excision repair (TC-NER) complex which assembles and interacts with the multiprotein RNA polymerase II complex when it stalls at DNA lesions.

It is found in the nucleus. DNA-binding protein which is required for efficient transcription-coupled nucleotide excision repair (TC-NER). Acts as part of a TC-NER complex which assembles and interacts with RNA polymerase II (RNAPII) when it stalls at DNA lesions. The sequence is that of Winged helix repair factor 1 from Xenopus laevis (African clawed frog).